The primary structure comprises 183 residues: Large ribosomal subunit protein uL6 (183 aa).

Belongs to the universal ribosomal protein uL6 family. In terms of assembly, part of the 50S ribosomal subunit.

This protein binds to the 23S rRNA, and is important in its secondary structure. It is located near the subunit interface in the base of the L7/L12 stalk, and near the tRNA binding site of the peptidyltransferase center. This chain is Large ribosomal subunit protein uL6, found in Moorella thermoacetica (strain ATCC 39073 / JCM 9320).